A 615-amino-acid polypeptide reads, in one-letter code: Alpha-terpinene synthase TPS33PK, chloroplastic (615 aa).

The transit peptide at 1-33 directs the protein to the chloroplast; it reads MFCRLGVHQFSPLSLILNTTKLARASTLSSACY. Residues glutamate 334, valine 371, leucine 375, leucine 513, and serine 516 each contribute to the (2E)-geranyl diphosphate site. Mg(2+) is bound by residues valine 371 and leucine 375. The DDXXD motif signature appears at 371–375; that stretch reads VYGTL. Mg(2+)-binding residues include serine 516, methionine 520, and aspartate 524.

The protein belongs to the terpene synthase family. Tpsb subfamily. Mg(2+) is required as a cofactor. Mn(2+) serves as cofactor.

The protein localises to the plastid. Its subcellular location is the chloroplast. The catalysed reaction is (2E)-geranyl diphosphate = alpha-terpinene + diphosphate. It catalyses the reaction (2E)-geranyl diphosphate = gamma-terpinene + diphosphate. It functions in the pathway secondary metabolite biosynthesis; terpenoid biosynthesis. Involved in monoterpene (C10) olefins biosynthesis, constituants of cannabinoids and terpenoids-rich resins. Catalyzes mainly the conversion of (2E)-geranyl diphosphate to alpha-terpinene and gamma-terpinene. This chain is Alpha-terpinene synthase TPS33PK, chloroplastic, found in Cannabis sativa (Hemp).